Consider the following 150-residue polypeptide: Large ribosomal subunit protein eL19 (150 aa).

Residues 55–89 form a disordered region; sequence IKGQSRYRAKIRHEQKKKGRHRGPGSRKGKKTARM.

This sequence belongs to the eukaryotic ribosomal protein eL19 family. Part of the 50S ribosomal subunit.

Binds to the 23S rRNA. This is Large ribosomal subunit protein eL19 from Pyrococcus furiosus (strain ATCC 43587 / DSM 3638 / JCM 8422 / Vc1).